The following is a 1165-amino-acid chain: Vacuolar segregation protein 7 (1165 aa).

Residues 1–919 lie on the Cytoplasmic side of the membrane; it reads MTEEDRKLTV…RKSPFVKVKN (919 aa). The tract at residues 118-147 is disordered; it reads SVSSTNNNSNNALINHNPLSSHLSNPSSSL. Phosphoserine is present on serine 164. 4 disordered regions span residues 215 to 241, 274 to 423, 461 to 497, and 560 to 668; these read SNNT…LPSL, KAKN…SEKP, LIFP…SAPL, and EPPH…KRPL. Over residues 216–230 the composition is skewed to polar residues; that stretch reads NNTAPSTSNNIGSNT. The span at 334-345 shows a compositional bias: low complexity; that stretch reads TTSTKTAPSTAP. The segment covering 346–367 has biased composition (polar residues); that stretch reads LGSTDNTQALTASVSSSNADNH. Over residues 375 to 391 the composition is skewed to low complexity; sequence SSNNNGNNSNSASNKTN. The span at 393 to 412 shows a compositional bias: polar residues; it reads DIKNSNADLSASTSNNNAIN. The span at 413–423 shows a compositional bias: basic and acidic residues; the sequence is DDSHESNSEKP. Composition is skewed to low complexity over residues 469–485 and 562–571; these read QQQQ…QQQQ and PHQLQQQQPP. A compositionally biased stretch (polar residues) spans 576 to 587; the sequence is SVDSYTSDNPDS. The span at 599 to 613 shows a compositional bias: low complexity; sequence SLVSLSKVSPHLLSS. The segment covering 614-662 has biased composition (polar residues); that stretch reads TSSNGNTISCPNVATNSQELEPNNDISTKKSLSNSTLRHSSANRNSNYG. The chain crosses the membrane as a helical; Signal-anchor for type II membrane protein span at residues 920–940; the sequence is FLYLAFVISSLLMTGFILGFL. At 941–1165 the chain is on the vacuolar side; the sequence is LATNKELQDV…KDSMVHPGKK (225 aa). Asparagine 1020 and asparagine 1099 each carry an N-linked (GlcNAc...) asparagine glycan. The interval 1074 to 1121 is disordered; that stretch reads SPGSREAKHENDDDDDDDGDDGDDENNTNERQYKSKPNARDDKEDDTK. Acidic residues predominate over residues 1085-1100; that stretch reads DDDDDDDGDDGDDENN. Residues 1111–1121 show a composition bias toward basic and acidic residues; it reads NARDDKEDDTK.

In terms of assembly, component of the PI(3,5)P2 regulatory complex, composed of ATG18, FIG4, FAB1, VAC14 and VAC7. VAC14 nucleates the assembly of the complex and serves as a scaffold. Post-translationally, N-glycosylated.

The protein localises to the vacuole membrane. Functionally, the PI(3,5)P2 regulatory complex regulates both the synthesis and turnover of phosphatidylinositol 3,5-bisphosphate (PtdIns(3,5)P2). Positively regulates FAB1 kinase activity. Major activator of FAB1 during hyperosmotic shock and can elevate levels of PtdIns(3,5)P2 in the absence of VAC14 and FIG4. Directly involved in vacuolar membrane scission. Required for normal vacuole acidification, inheritance and morphology. In Saccharomyces cerevisiae (strain ATCC 204508 / S288c) (Baker's yeast), this protein is Vacuolar segregation protein 7 (VAC7).